We begin with the raw amino-acid sequence, 527 residues long: Thymidine kinase (527 aa).

Residues 1-57 form a disordered region; the sequence is MTGRGQPPKKNDTYDYPRKQPPKNGSYDNYDYPTSTKTRSTNKQRKDSNYPPRETIF. The span at 9–18 shows a compositional bias: basic and acidic residues; it reads KKNDTYDYPR. Over residues 32-41 the composition is skewed to polar residues; it reads YPTSTKTRST. 216 to 223 contacts ATP; the sequence is GSIGVGKT. The active-site Proton acceptor is E243. Positions 260 and 281 each coordinate substrate. Residue R368 participates in ATP binding. Position 374 (R374) interacts with substrate.

Belongs to the herpesviridae thymidine kinase family. In terms of assembly, homodimer.

It carries out the reaction thymidine + ATP = dTMP + ADP + H(+). Its function is as follows. Catalyzes the transfer of the gamma-phospho group of ATP to thymidine to generate dTMP in the salvage pathway of pyrimidine synthesis. The dTMP serves as a substrate for DNA polymerase during viral DNA replication. Allows the virus to be reactivated and to grow in non-proliferative cells lacking a high concentration of phosphorylated nucleic acid precursors. This Saimiriine herpesvirus 2 (strain 11) (SaHV-2) protein is Thymidine kinase.